The primary structure comprises 675 residues: DNA ligase (675 aa).

Residues 35-39 (DAVYD), 84-85 (SL), and glutamate 118 each bind NAD(+). Catalysis depends on lysine 120, which acts as the N6-AMP-lysine intermediate. Residues arginine 141, glutamate 178, lysine 295, and lysine 319 each coordinate NAD(+). Residues cysteine 413, cysteine 416, cysteine 431, and cysteine 436 each coordinate Zn(2+). One can recognise a BRCT domain in the interval 598–675 (GAIGALTGQT…DEAELKALLS (78 aa)).

Belongs to the NAD-dependent DNA ligase family. LigA subfamily. Mg(2+) serves as cofactor. Mn(2+) is required as a cofactor.

The enzyme catalyses NAD(+) + (deoxyribonucleotide)n-3'-hydroxyl + 5'-phospho-(deoxyribonucleotide)m = (deoxyribonucleotide)n+m + AMP + beta-nicotinamide D-nucleotide.. In terms of biological role, DNA ligase that catalyzes the formation of phosphodiester linkages between 5'-phosphoryl and 3'-hydroxyl groups in double-stranded DNA using NAD as a coenzyme and as the energy source for the reaction. It is essential for DNA replication and repair of damaged DNA. This is DNA ligase from Synechococcus sp. (strain RCC307).